An 88-amino-acid chain; its full sequence is Sec-independent protein translocase protein TatA (88 aa).

Residues 1-21 (MGSLSPWHWAILAVVVIVLFG) form a helical membrane-spanning segment. A compositionally biased stretch (basic and acidic residues) spans 43–52 (MREMQSETKA). The segment at 43 to 88 (MREMQSETKAEPSAIETNTANPTPVQSQRIDPAAATGQDQTEARPA) is disordered. Residues 57-71 (IETNTANPTPVQSQR) show a composition bias toward polar residues.

Belongs to the TatA/E family. In terms of assembly, the Tat system comprises two distinct complexes: a TatABC complex, containing multiple copies of TatA, TatB and TatC subunits, and a separate TatA complex, containing only TatA subunits. Substrates initially bind to the TatABC complex, which probably triggers association of the separate TatA complex to form the active translocon.

The protein resides in the cell membrane. Its function is as follows. Part of the twin-arginine translocation (Tat) system that transports large folded proteins containing a characteristic twin-arginine motif in their signal peptide across membranes. TatA could form the protein-conducting channel of the Tat system. In Mycobacterium marinum (strain ATCC BAA-535 / M), this protein is Sec-independent protein translocase protein TatA.